A 37-amino-acid polypeptide reads, in one-letter code: Large ribosomal subunit protein bL36 (37 aa).

Belongs to the bacterial ribosomal protein bL36 family.

The chain is Large ribosomal subunit protein bL36 from Sulfurimonas denitrificans (strain ATCC 33889 / DSM 1251) (Thiomicrospira denitrificans (strain ATCC 33889 / DSM 1251)).